Reading from the N-terminus, the 192-residue chain is NF-kappa-B inhibitor-interacting Ras-like protein 1 (192 aa).

Residues 1-192 form a small GTPase-like region; the sequence is MGKGCKVVVC…KSKGTPSNDI (192 aa). GTP is bound at residue 11–18; it reads GMASVGKT. Residues 35-43 carry the Effector region motif; the sequence is TSDTQEDIY. GTP is bound by residues 61-65 and 120-123; these read DTRGL and NKCE. The segment at 169 to 192 is disordered; it reads TQPQSKSAFPLPGRKSKGTPSNDI.

It belongs to the small GTPase superfamily. Ras family. KappaB-Ras subfamily.

Its subcellular location is the cytoplasm. In terms of biological role, atypical Ras-like protein that acts as a potent regulator of NF-kappa-B activity by preventing the degradation of NF-kappa-B inhibitor beta (NFKBIB) by most signals, explaining why NFKBIB is more resistant to degradation. This chain is NF-kappa-B inhibitor-interacting Ras-like protein 1 (nkiras1), found in Danio rerio (Zebrafish).